The following is a 476-amino-acid chain: Cysteine--tRNA ligase (476 aa).

Residue Cys-31 coordinates Zn(2+). The 'HIGH' region motif lies at Pro-33–Asn-43. 3 residues coordinate Zn(2+): Cys-211, His-236, and Glu-240. A 'KMSKS' region motif is present at residues Lys-269–Ser-273. Lys-272 contacts ATP.

This sequence belongs to the class-I aminoacyl-tRNA synthetase family. In terms of assembly, monomer. Zn(2+) is required as a cofactor.

It localises to the cytoplasm. It carries out the reaction tRNA(Cys) + L-cysteine + ATP = L-cysteinyl-tRNA(Cys) + AMP + diphosphate. The sequence is that of Cysteine--tRNA ligase from Xanthomonas euvesicatoria pv. vesicatoria (strain 85-10) (Xanthomonas campestris pv. vesicatoria).